Consider the following 524-residue polypeptide: Germ cell-less protein-like 1 (524 aa).

A disordered region spans residues 1–37 (MGALSSRVLRPAGRTEQPEPTPGAGGAARRSDAGEDA). The Nuclear localization signal signature appears at 47 to 53 (GRKRKRS). The interval 63 to 83 (DSETDDDEDEGDEQQRLLNTP) is disordered. Ser64 bears the Phosphoserine mark. Residues 65-74 (ETDDDEDEGD) are compositionally biased toward acidic residues. Residue Thr66 is modified to Phosphothreonine. A Nuclear localization signal motif is present at residues 83–89 (PRRKKLK). One can recognise a BTB domain in the interval 106–176 (SDIKICALGE…LYRDDVLIKP (71 aa)).

In terms of assembly, interacts with TMPO-Beta, TSG101 and TFDP2. Interacts with EMD. As to expression, ubiquitously expressed at low levels throughout development and in adult tissues.

The protein resides in the nucleus matrix. Possible function in spermatogenesis. Enhances the degradation of MDM2 and increases the amount of p53 probably by modulating the nucleocytoplasmic transport. The polypeptide is Germ cell-less protein-like 1 (Gmcl1) (Mus musculus (Mouse)).